Consider the following 1712-residue polypeptide: Collagen alpha-2(IV) chain (1712 aa).

An N-terminal signal peptide occupies residues 1 to 25 (MGRDQRAVAGPALRRWLLLGTVTVG). Positions 26-183 (FLAQSVLAGV…LPKEERDRYR (158 aa)) are cleaved as a propeptide — N-terminal propeptide (7S domain). 5 disordered regions span residues 60 to 237 (RGQP…GFYG), 302 to 448 (GLRG…PDGF), 507 to 640 (INGE…DAGL), 690 to 906 (GLPG…SPGF), and 1157 to 1480 (TGPP…GLPG). The segment covering 68–84 (PQGYNGPPGLQGFPGLQ) has biased composition (low complexity). Positions 121-130 (GHPGQGGPRG) are enriched in gly residues. N-linked (GlcNAc...) asparagine glycosylation occurs at Asn-138. Over residues 140–153 (TQGDSGPQGPPGSE) the composition is skewed to low complexity. Over residues 175-186 (PKEERDRYRGEP) the composition is skewed to basic and acidic residues. Residues 184 to 1484 (GEPGEPGLVG…SPGLPGMPGR (1301 aa)) form a triple-helical region region. Composition is skewed to pro residues over residues 215-224 (RPGPPGPPGP) and 433-445 (PPGPPGLPGPPGP). Basic and acidic residues-rich tracts occupy residues 511 to 520 (PGRKGDRGDP) and 571 to 582 (KGDDGSPGRDGL). Composition is skewed to low complexity over residues 628–640 (LKGQRGFPGDAGL) and 698–710 (TGAKGLRGIPGFA). A compositionally biased stretch (gly residues) spans 711–720 (GADGGPGPRG). Over residues 721–730 (LPGDAGREGF) the composition is skewed to low complexity. Residues 752–766 (DGSPGPIGLPGPDGP) are compositionally biased toward pro residues. 5 stretches are compositionally biased toward low complexity: residues 769–778 (ERGLPGEVLG), 813–823 (MPGMPGLKGQP), 831–844 (QPGLYGPPGLHGFP), 1302–1328 (GSAALPGSKGDTGNPGAPGTPGTKGWA), and 1400–1421 (QPGTVGPQGRRGPPGAPGEMGP). The Collagen IV NC1 domain occupies 1489–1712 (GYLLVKHSQT…SRCQVCMKNL (224 aa)). 3'-bromotyrosine is present on Tyr-1490. Intrachain disulfides connect Cys-1504–Cys-1593, Cys-1537–Cys-1590, Cys-1549–Cys-1555, Cys-1612–Cys-1708, Cys-1646–Cys-1705, and Cys-1658–Cys-1665.

This sequence belongs to the type IV collagen family. There are six type IV collagen isoforms, alpha 1(IV)-alpha 6(IV), each of which can form a triple helix structure with 2 other chains to generate type IV collagen network. Interacts with EFEMP2. In terms of processing, prolines at the third position of the tripeptide repeating unit (G-X-Y) are hydroxylated in some or all of the chains. Post-translationally, type IV collagens contain numerous cysteine residues which are involved in inter- and intramolecular disulfide bonding. 12 of these, located in the NC1 domain, are conserved in all known type IV collagens. The trimeric structure of the NC1 domains is stabilized by covalent bonds between Lys and Met residues. In terms of processing, proteolytic processing produces the C-terminal NC1 peptide, canstatin.

The protein resides in the secreted. It is found in the extracellular space. It localises to the extracellular matrix. Its subcellular location is the basement membrane. Its function is as follows. Type IV collagen is the major structural component of glomerular basement membranes (GBM), forming a 'chicken-wire' meshwork together with laminins, proteoglycans and entactin/nidogen. Functionally, canstatin, a cleavage product corresponding to the collagen alpha 2(IV) NC1 domain, possesses both anti-angiogenic and anti-tumor cell activity. It inhibits proliferation and migration of endothelial cells, reduces mitochondrial membrane potential, and induces apoptosis. Specifically induces Fas-dependent apoptosis and activates procaspase-8 and -9 activity. Ligand for alphavbeta3 and alphavbeta5 integrins. The chain is Collagen alpha-2(IV) chain from Homo sapiens (Human).